The sequence spans 144 residues: Large ribosomal subunit protein uL16 (144 aa).

Belongs to the universal ribosomal protein uL16 family. As to quaternary structure, part of the 50S ribosomal subunit.

Binds 23S rRNA and is also seen to make contacts with the A and possibly P site tRNAs. This is Large ribosomal subunit protein uL16 from Lysinibacillus sphaericus (strain C3-41).